We begin with the raw amino-acid sequence, 206 residues long: Proteasome subunit beta 2 (206 aa).

Residues 1 to 7 (MREAVSK) constitute a propeptide, removed in mature form; by autocatalysis. Thr8 serves as the catalytic Nucleophile.

The protein belongs to the peptidase T1B family. In terms of assembly, the 20S proteasome core is composed of 14 alpha and 14 beta subunits that assemble into four stacked heptameric rings, resulting in a barrel-shaped structure. The two inner rings, each composed of seven catalytic beta subunits, are sandwiched by two outer rings, each composed of seven alpha subunits. The catalytic chamber with the active sites is on the inside of the barrel. Has a gated structure, the ends of the cylinder being occluded by the N-termini of the alpha-subunits. Is capped at one or both ends by the proteasome regulatory ATPase, PAN.

Its subcellular location is the cytoplasm. It carries out the reaction Cleavage of peptide bonds with very broad specificity.. With respect to regulation, the formation of the proteasomal ATPase PAN-20S proteasome complex, via the docking of the C-termini of PAN into the intersubunit pockets in the alpha-rings, triggers opening of the gate for substrate entry. Interconversion between the open-gate and close-gate conformations leads to a dynamic regulation of the 20S proteasome proteolysis activity. Its function is as follows. Component of the proteasome core, a large protease complex with broad specificity involved in protein degradation. This chain is Proteasome subunit beta 2, found in Desulfurococcus amylolyticus (strain DSM 18924 / JCM 16383 / VKM B-2413 / 1221n) (Desulfurococcus kamchatkensis).